The following is a 431-amino-acid chain: Mevalonate kinase (431 aa).

Residues lysine 13, serine 139, and 144 to 150 (GAGLGSS) contribute to the ATP site. Residues serine 150 and glutamate 198 each contribute to the Mg(2+) site. Aspartate 209 (proton acceptor) is an active-site residue.

It belongs to the GHMP kinase family. Mevalonate kinase subfamily. As to quaternary structure, homodimer.

The protein resides in the cytoplasm. It localises to the cytosol. It catalyses the reaction (R)-mevalonate + ATP = (R)-5-phosphomevalonate + ADP + H(+). It functions in the pathway isoprenoid biosynthesis; isopentenyl diphosphate biosynthesis via mevalonate pathway; isopentenyl diphosphate from (R)-mevalonate: step 1/3. Its function is as follows. Mevalonate kinase; part of the second module of ergosterol biosynthesis pathway that includes the middle steps of the pathway. ERG12 converts mevalonate into 5-phosphomevalonate. The second module is carried out in the vacuole and involves the formation of farnesyl diphosphate, which is also an important intermediate in the biosynthesis of ubiquinone, dolichol, heme and prenylated proteins. Activity by the mevalonate kinase ERG12 first converts mevalonate into 5-phosphomevalonate. 5-phosphomevalonate is then further converted to 5-diphosphomevalonate by the phosphomevalonate kinase ERG8. The diphosphomevalonate decarboxylase MVD then produces isopentenyl diphosphate. The isopentenyl-diphosphate delta-isomerase IDI1 then catalyzes the 1,3-allylic rearrangement of the homoallylic substrate isopentenyl (IPP) to its highly electrophilic allylic isomer, dimethylallyl diphosphate (DMAPP). Finally the farnesyl diphosphate synthase ERG20 catalyzes the sequential condensation of isopentenyl pyrophosphate with dimethylallyl pyrophosphate, and then with the resultant geranylpyrophosphate to the ultimate product farnesyl pyrophosphate. The sequence is that of Mevalonate kinase from Candida albicans (strain SC5314 / ATCC MYA-2876) (Yeast).